The sequence spans 709 residues: Cell adhesion molecule CEACAM3 (709 aa).

An N-terminal signal peptide occupies residues 1–34 (MELSSVLPCKRCTPWRGLLLTASLLTCWLLPTTA). Ig-like V-type domains are found at residues 35 to 142 (QVSI…HVYF), 155 to 262 (QLSI…QVDT), 275 to 382 (QLTV…QVNT), 393 to 500 (LLTI…SVHT), and 509 to 616 (QLVI…HIYK). 16 N-linked (GlcNAc...) asparagine glycosylation sites follow: N73, N86, N103, N110, N133, N207, N224, N231, N327, N344, N351, N381, N462, N561, N578, and N585. In terms of domain architecture, Ig-like C2-type spans 631–695 (RVKSSVVLTC…YRCEVSNPVS (65 aa)).

It belongs to the immunoglobulin superfamily. CEA family. In terms of tissue distribution, expression detected only in placenta.

Functionally, possibly involved in cell adhesion. The sequence is that of Cell adhesion molecule CEACAM3 from Rattus norvegicus (Rat).